Consider the following 1331-residue polypeptide: DNA-directed RNA polymerase subunit beta' (1331 aa).

Zn(2+) is bound by residues Cys-220, Cys-293, Cys-300, and Cys-303. Disordered stretches follow at residues 1236–1257 (DFVDEGTSRSPNGYSNVVTNDN) and 1294–1331 (ISGDELISDDTPIPSDVQGKAPVIDDDAMIDDNWMKDQ). Positions 1243 to 1257 (SRSPNGYSNVVTNDN) are enriched in polar residues.

This sequence belongs to the RNA polymerase beta' chain family. RpoC2 subfamily. In cyanobacteria the RNAP catalytic core is composed of 2 alpha, 1 beta, 1 beta', 1 gamma and 1 omega subunit. When a sigma factor is associated with the core the holoenzyme is formed, which can initiate transcription. Zn(2+) serves as cofactor.

It catalyses the reaction RNA(n) + a ribonucleoside 5'-triphosphate = RNA(n+1) + diphosphate. Functionally, DNA-dependent RNA polymerase catalyzes the transcription of DNA into RNA using the four ribonucleoside triphosphates as substrates. In Picosynechococcus sp. (strain ATCC 27264 / PCC 7002 / PR-6) (Agmenellum quadruplicatum), this protein is DNA-directed RNA polymerase subunit beta'.